Reading from the N-terminus, the 111-residue chain is UPF0060 membrane protein xcc-b100_1273 (111 aa).

Transmembrane regions (helical) follow at residues 8–28, 34–54, 62–82, and 91–111; these read LLLF…PYLW, SVWL…LLTL, VYAA…WWVD, and LLGA…PRSG.

Belongs to the UPF0060 family.

The protein localises to the cell inner membrane. The chain is UPF0060 membrane protein xcc-b100_1273 from Xanthomonas campestris pv. campestris (strain B100).